A 472-amino-acid chain; its full sequence is Protein nucleotidyltransferase YdiU (472 aa).

ATP is bound by residues Gly86, Gly88, Arg89, Lys109, Asp121, Gly122, Arg172, and Arg179. The active-site Proton acceptor is Asp244. Residues Asn245 and Asp254 each coordinate Mg(2+). Asp254 is a binding site for ATP.

This sequence belongs to the SELO family. Requires Mg(2+) as cofactor. Mn(2+) is required as a cofactor.

The enzyme catalyses L-seryl-[protein] + ATP = 3-O-(5'-adenylyl)-L-seryl-[protein] + diphosphate. It catalyses the reaction L-threonyl-[protein] + ATP = 3-O-(5'-adenylyl)-L-threonyl-[protein] + diphosphate. The catalysed reaction is L-tyrosyl-[protein] + ATP = O-(5'-adenylyl)-L-tyrosyl-[protein] + diphosphate. It carries out the reaction L-histidyl-[protein] + UTP = N(tele)-(5'-uridylyl)-L-histidyl-[protein] + diphosphate. The enzyme catalyses L-seryl-[protein] + UTP = O-(5'-uridylyl)-L-seryl-[protein] + diphosphate. It catalyses the reaction L-tyrosyl-[protein] + UTP = O-(5'-uridylyl)-L-tyrosyl-[protein] + diphosphate. Functionally, nucleotidyltransferase involved in the post-translational modification of proteins. It can catalyze the addition of adenosine monophosphate (AMP) or uridine monophosphate (UMP) to a protein, resulting in modifications known as AMPylation and UMPylation. The polypeptide is Protein nucleotidyltransferase YdiU (Ruegeria pomeroyi (strain ATCC 700808 / DSM 15171 / DSS-3) (Silicibacter pomeroyi)).